A 414-amino-acid polypeptide reads, in one-letter code: Putative nickel insertion protein (414 aa).

The segment at Ala70–Pro91 is disordered.

This sequence belongs to the LarC family.

The sequence is that of Putative nickel insertion protein from Picosynechococcus sp. (strain ATCC 27264 / PCC 7002 / PR-6) (Agmenellum quadruplicatum).